Here is a 447-residue protein sequence, read N- to C-terminus: Biotin carboxylase (447 aa).

One can recognise a Biotin carboxylation domain in the interval M1–K447. ATP is bound by residues K117, K159, G165–G166, E201–I204, and H209. The ATP-grasp domain maps to K121–Q318. Hydrogencarbonate is bound at residue K238. The ATP site is built by E276 and E289. Mg(2+)-binding residues include E276, E289, and N291. Mn(2+)-binding residues include E276, E289, and N291. Residues R293, V296, and R339 each contribute to the hydrogencarbonate site. R293 is an active-site residue. Residue R339 participates in biotin binding.

As to quaternary structure, acetyl-CoA carboxylase is a heterohexamer of biotin carboxyl carrier protein, biotin carboxylase and the two subunits of carboxyl transferase in a 2:2 complex. Mg(2+) is required as a cofactor. Mn(2+) serves as cofactor.

It catalyses the reaction N(6)-biotinyl-L-lysyl-[protein] + hydrogencarbonate + ATP = N(6)-carboxybiotinyl-L-lysyl-[protein] + ADP + phosphate + H(+). The protein operates within lipid metabolism; malonyl-CoA biosynthesis; malonyl-CoA from acetyl-CoA: step 1/1. In terms of biological role, this protein is a component of the acetyl coenzyme A carboxylase complex; first, biotin carboxylase catalyzes the carboxylation of the carrier protein and then the transcarboxylase transfers the carboxyl group to form malonyl-CoA. The polypeptide is Biotin carboxylase (accC) (Nostoc sp. (strain PCC 7120 / SAG 25.82 / UTEX 2576)).